The sequence spans 53 residues: ATP synthase protein 8 (53 aa).

The helical transmembrane segment at methionine 4–cysteine 24 threads the bilayer.

Belongs to the ATPase protein 8 family. In terms of assembly, F-type ATPases have 2 components, CF(1) - the catalytic core - and CF(0) - the membrane proton channel.

Its subcellular location is the mitochondrion membrane. Its function is as follows. Mitochondrial membrane ATP synthase (F(1)F(0) ATP synthase or Complex V) produces ATP from ADP in the presence of a proton gradient across the membrane which is generated by electron transport complexes of the respiratory chain. F-type ATPases consist of two structural domains, F(1) - containing the extramembraneous catalytic core and F(0) - containing the membrane proton channel, linked together by a central stalk and a peripheral stalk. During catalysis, ATP synthesis in the catalytic domain of F(1) is coupled via a rotary mechanism of the central stalk subunits to proton translocation. Part of the complex F(0) domain. Minor subunit located with subunit a in the membrane. This is ATP synthase protein 8 (mt:ATPase8) from Drosophila mauritiana (Fruit fly).